The following is a 462-amino-acid chain: Fumarate hydratase class II (462 aa).

Residues serine 97–threonine 99, histidine 127–aspartate 130, serine 137–asparagine 139, and threonine 185 contribute to the substrate site. The active-site Proton donor/acceptor is histidine 186. Serine 316 is an active-site residue. Substrate is bound by residues serine 317 and lysine 322–asparagine 324.

Belongs to the class-II fumarase/aspartase family. Fumarase subfamily. In terms of assembly, homotetramer.

It localises to the cytoplasm. It catalyses the reaction (S)-malate = fumarate + H2O. The protein operates within carbohydrate metabolism; tricarboxylic acid cycle; (S)-malate from fumarate: step 1/1. Its function is as follows. Involved in the TCA cycle. Catalyzes the stereospecific interconversion of fumarate to L-malate. This chain is Fumarate hydratase class II, found in Bacillus anthracis.